The sequence spans 235 residues: Acyl-protein thioesterase 1 (235 aa).

Residues Ser119, Asp172, and His206 each act as charge relay system in the active site.

It belongs to the AB hydrolase superfamily. AB hydrolase 2 family.

Its subcellular location is the cytoplasm. It is found in the nucleus. The enzyme catalyses S-hexadecanoyl-L-cysteinyl-[protein] + H2O = L-cysteinyl-[protein] + hexadecanoate + H(+). Hydrolyzes fatty acids from S-acylated cysteine residues in proteins with a strong preference for palmitoylated G-alpha proteins over other acyl substrates. Mediates the deacylation of G-alpha proteins such as GPA1 in vivo, but has weak or no activity toward palmitoylated Ras proteins. Has weak lysophospholipase activity in vitro; however such activity may not exist in vivo. The sequence is that of Acyl-protein thioesterase 1 from Eremothecium gossypii (strain ATCC 10895 / CBS 109.51 / FGSC 9923 / NRRL Y-1056) (Yeast).